Here is a 97-residue protein sequence, read N- to C-terminus: Ribosomal biogenesis factor (97 aa).

S19 is subject to Phosphoserine. K21 is subject to N6-acetyllysine. S69 is modified (phosphoserine).

Associates with the pre-60S ribosomal particles.

Its subcellular location is the nucleus. It localises to the nucleolus. Functionally, trans-acting factor in ribosome biogenesis required for efficient 40S and 60S subunit production. The sequence is that of Ribosomal biogenesis factor (Rbis) from Mus musculus (Mouse).